Here is a 505-residue protein sequence, read N- to C-terminus: Trans-cinnamate 4-monooxygenase (505 aa).

Residues 3 to 23 (LLLLEKSLIAVFVAVILATVI) form a helical membrane-spanning segment. Residues 213–218 (RSRLAQ) and A306 each bind (E)-cinnamate. C447 serves as a coordination point for heme.

Belongs to the cytochrome P450 family. The cofactor is heme. In terms of tissue distribution, expressed in roots, leaves, stems, flowers and siliques.

Its subcellular location is the membrane. The catalysed reaction is (E)-cinnamate + reduced [NADPH--hemoprotein reductase] + O2 = (E)-4-coumarate + oxidized [NADPH--hemoprotein reductase] + H2O + H(+). The protein operates within phenylpropanoid metabolism; trans-4-coumarate biosynthesis; trans-4-coumarate from trans-cinnamate: step 1/1. Its function is as follows. Catalyzes the first oxidative step of the phenylpropanoid pathway in higher plants by transforming trans-cinnamate into p-coumarate. The compounds formed by this pathway are essential components for lignification, pollination, and defense against ultraviolet light, predators and pathogens. This chain is Trans-cinnamate 4-monooxygenase, found in Arabidopsis thaliana (Mouse-ear cress).